The primary structure comprises 608 residues: uncharacterized protein (608 aa).

Residues 4–24 (LIFMALLMSLLFIGTVFGYGD) traverse the membrane as a helical segment.

It to M.jannaschii MJ1394 and A.fulgidus AF2028.

The protein resides in the membrane. This is an uncharacterized protein from Methanocaldococcus jannaschii (strain ATCC 43067 / DSM 2661 / JAL-1 / JCM 10045 / NBRC 100440) (Methanococcus jannaschii).